A 615-amino-acid polypeptide reads, in one-letter code: ATP-dependent zinc metalloprotease FtsH (615 aa).

Residues 1 to 8 (MAMNKDKP) lie on the Cytoplasmic side of the membrane. Residues 9 to 29 (WTLYLLAVGLAVLAAVQFGLF) traverse the membrane as a helical segment. Over 30 to 104 (SQPAVQAIPY…FSGVVEDNTV (75 aa)) the chain is Periplasmic. The helical transmembrane segment at 105-125 (ATVMGALMPLLMLLALWYFLF) threads the bilayer. Over 126–615 (HGLGQKQGLG…ATYVLVDATK (490 aa)) the chain is Cytoplasmic. 198-205 (GPPGTGKT) lines the ATP pocket. Residue histidine 420 coordinates Zn(2+). Glutamate 421 is a catalytic residue. Histidine 424 and aspartate 497 together coordinate Zn(2+).

In the central section; belongs to the AAA ATPase family. It in the C-terminal section; belongs to the peptidase M41 family. As to quaternary structure, homohexamer. Zn(2+) serves as cofactor.

Its subcellular location is the cell inner membrane. Its function is as follows. Acts as a processive, ATP-dependent zinc metallopeptidase for both cytoplasmic and membrane proteins. Plays a role in the quality control of integral membrane proteins. The chain is ATP-dependent zinc metalloprotease FtsH from Pseudomonas putida (strain ATCC 700007 / DSM 6899 / JCM 31910 / BCRC 17059 / LMG 24140 / F1).